Here is a 227-residue protein sequence, read N- to C-terminus: Uridylate kinase (227 aa).

Residue 6–10 participates in ATP binding; that stretch reads KVSGK. Gly43 contributes to the UMP binding site. Residues Gly44 and Arg48 each coordinate ATP. UMP-binding positions include Asp65 and 113-119; that span reads FQPGQST. Residues Thr139, Asn140, Tyr145, and Asp148 each contribute to the ATP site.

This sequence belongs to the UMP kinase family. In terms of assembly, homohexamer.

The protein localises to the cytoplasm. It catalyses the reaction UMP + ATP = UDP + ADP. It participates in pyrimidine metabolism; CTP biosynthesis via de novo pathway; UDP from UMP (UMPK route): step 1/1. Inhibited by UTP. Functionally, catalyzes the reversible phosphorylation of UMP to UDP. This is Uridylate kinase from Sulfolobus acidocaldarius (strain ATCC 33909 / DSM 639 / JCM 8929 / NBRC 15157 / NCIMB 11770).